A 415-amino-acid chain; its full sequence is Dynein assembly factor with WD repeat domains 1 (415 aa).

8 WD repeats span residues A90–T129, G132–T172, G175–T214, G217–V256, G259–T298, G301–Q340, G343–E384, and G385–H415.

The protein belongs to the WD repeat WDR69 family. Expressed in organs bearing motile cilia, including the pronephros, otic vesicles and Kupffer's vesicle.

It localises to the cytoplasm. The protein localises to the cytoskeleton. It is found in the flagellum basal body. Its subcellular location is the flagellum axoneme. In terms of biological role, required for axonemal dynein assembly and ciliary motility in ciliated organs, including Kupffer's vesicle, during embryogenesis. Facilitates the onset of robust cilia motility during development. This Danio rerio (Zebrafish) protein is Dynein assembly factor with WD repeat domains 1 (daw1).